A 300-amino-acid chain; its full sequence is Geranyl diphosphate 2-C-methyltransferase (300 aa).

A disordered region spans residues M1–A24.

Belongs to the geranyl diphosphate 2-C-methyltransferase family. The cofactor is Mg(2+).

The catalysed reaction is (2E)-geranyl diphosphate + S-adenosyl-L-methionine = (E)-2-methylgeranyl diphosphate + S-adenosyl-L-homocysteine + H(+). Catalyzes the SAM-dependent methylation of geranyl diphosphate (GPP) to yield (E)-2-methylgeranyl diphosphate (2-MeGPP). The sequence is that of Geranyl diphosphate 2-C-methyltransferase (gdpmt) from Streptomyces lasalocidi (Streptomyces lasaliensis).